The following is a 637-amino-acid chain: Chaperone protein HtpG (637 aa).

Residues 1-345 (MSQQETHGFQ…SNDLPLNVSR (345 aa)) form an a; substrate-binding region. Positions 346-562 (EILQDNHITK…EGEMSTQMIK (217 aa)) are b. The c stretch occupies residues 563-637 (LMQAAGQPVP…MNQMLLANLK (75 aa)).

It belongs to the heat shock protein 90 family. In terms of assembly, homodimer.

The protein resides in the cytoplasm. Its function is as follows. Molecular chaperone. Has ATPase activity. This Shewanella oneidensis (strain ATCC 700550 / JCM 31522 / CIP 106686 / LMG 19005 / NCIMB 14063 / MR-1) protein is Chaperone protein HtpG.